A 147-amino-acid polypeptide reads, in one-letter code: uncharacterized protein (147 aa).

Positions 1-21 (MRTIFVGVLLLAIMGEGRLCA) are cleaved as a signal peptide.

This is an uncharacterized protein from Treponema pallidum (strain Nichols).